The sequence spans 95 residues: Cell division protein FtsB (95 aa).

Residues 1–3 (MRL) are Cytoplasmic-facing. Residues 4–21 (FILILSAILLLFQYDLWF) form a helical membrane-spanning segment. At 22-95 (GKNGYLDYKE…RIAKENKDNR (74 aa)) the chain is on the periplasmic side. A coiled-coil region spans residues 28-62 (DYKETAEEIAMHKAENTKLSQRNQVVAAEIRDLKD).

Belongs to the FtsB family. In terms of assembly, part of a complex composed of FtsB, FtsL and FtsQ.

It is found in the cell inner membrane. In terms of biological role, essential cell division protein. May link together the upstream cell division proteins, which are predominantly cytoplasmic, with the downstream cell division proteins, which are predominantly periplasmic. In Mannheimia succiniciproducens (strain KCTC 0769BP / MBEL55E), this protein is Cell division protein FtsB.